A 779-amino-acid polypeptide reads, in one-letter code: Vezatin (779 aa).

2 helical membrane-spanning segments follow: residues 139-159 (LATP…LLVM) and 162-182 (TWWI…YLVI). Residues 430–462 (VRSLQLHLKALLNEVIILEDELEKLVCTKETQE) adopt a coiled-coil conformation. Disordered stretches follow at residues 618-719 (PVDP…DSLQ) and 757-779 (EQTF…IEEK). Over residues 625–634 (ISNSEPSMNS) the composition is skewed to polar residues. Over residues 638 to 649 (KVSKNDTEEESN) the composition is skewed to basic and acidic residues. Positions 706–719 (GLTTAPPTPRDSLQ) are enriched in polar residues. A compositionally biased stretch (basic and acidic residues) spans 770–779 (EENKNEIEEK).

This sequence belongs to the vezatin family. In terms of assembly, interacts with USH2A (via the cytoplasmic region); the interaction associates VEZT with the USH2 complex at the stereocilia base. Interacts with myosin MYO7A and the cadherin-catenins complex.

It localises to the cell membrane. Its subcellular location is the cell projection. The protein resides in the stereocilium membrane. It is found in the cell junction. The protein localises to the adherens junction. It localises to the nucleus. Its subcellular location is the cytoplasmic vesicle. The protein resides in the secretory vesicle. It is found in the acrosome. Its function is as follows. Plays a pivotal role in the establishment of adherens junctions and their maintenance in adult life. Required for morphogenesis of the preimplantation embryo, and for the implantation process. (Microbial infection) In case of Listeria infection, promotes bacterial internalization by participating in myosin VIIa recruitment to the entry site. The protein is Vezatin (VEZT) of Homo sapiens (Human).